The chain runs to 96 residues: MKQFYSVVLTIIIYISSQSNVVSLDCRKLNEDCSKTVFSPCCDPLSCALSTAFNGKCKACLAGGYFCWRSDECCSGTCSWLKCTNPLTDIINKLTD.

Positions 1 to 23 are cleaved as a signal peptide; sequence MKQFYSVVLTIIIYISSQSNVVS. Disulfide bonds link Cys60/Cys74, Cys67/Cys78, and Cys73/Cys83.

Its subcellular location is the secreted. This is an uncharacterized protein from Schistosoma japonicum (Blood fluke).